Here is a 378-residue protein sequence, read N- to C-terminus: Erythronate-4-phosphate dehydrogenase (378 aa).

Substrate-binding residues include Ser-45 and Thr-66. Residues Asp-146 and Thr-175 each coordinate NAD(+). The active site involves Arg-208. Asp-232 lines the NAD(+) pocket. Glu-237 is an active-site residue. The active-site Proton donor is His-254. Gly-257 is a binding site for NAD(+). Residue Tyr-258 coordinates substrate.

The protein belongs to the D-isomer specific 2-hydroxyacid dehydrogenase family. PdxB subfamily. Homodimer.

The protein resides in the cytoplasm. It catalyses the reaction 4-phospho-D-erythronate + NAD(+) = (R)-3-hydroxy-2-oxo-4-phosphooxybutanoate + NADH + H(+). The protein operates within cofactor biosynthesis; pyridoxine 5'-phosphate biosynthesis; pyridoxine 5'-phosphate from D-erythrose 4-phosphate: step 2/5. Catalyzes the oxidation of erythronate-4-phosphate to 3-hydroxy-2-oxo-4-phosphonooxybutanoate. This Salmonella paratyphi A (strain ATCC 9150 / SARB42) protein is Erythronate-4-phosphate dehydrogenase.